Here is a 719-residue protein sequence, read N- to C-terminus: UvrABC system protein B (719 aa).

The Helicase ATP-binding domain maps to 49 to 435 (RRINAGERDV…TGGEFVEQVI (387 aa)). 62-69 (GATGTGKS) provides a ligand contact to ATP. A Beta-hairpin motif is present at residues 115–138 (YYDYYQPEAYIAQTDTYIEKDSSI). One can recognise a Helicase C-terminal domain in the interval 453–606 (QIDDLIGEIR…QIAYNEANGI (154 aa)). A disordered region spans residues 635–654 (GGSGRNASRGRRAQGEPGRA). In terms of domain architecture, UVR spans 674–709 (ADLIKDLTAQMMAAARDLQFELAARFRDEIADLKRE).

This sequence belongs to the UvrB family. Forms a heterotetramer with UvrA during the search for lesions. Interacts with UvrC in an incision complex.

It localises to the cytoplasm. Functionally, the UvrABC repair system catalyzes the recognition and processing of DNA lesions. A damage recognition complex composed of 2 UvrA and 2 UvrB subunits scans DNA for abnormalities. Upon binding of the UvrA(2)B(2) complex to a putative damaged site, the DNA wraps around one UvrB monomer. DNA wrap is dependent on ATP binding by UvrB and probably causes local melting of the DNA helix, facilitating insertion of UvrB beta-hairpin between the DNA strands. Then UvrB probes one DNA strand for the presence of a lesion. If a lesion is found the UvrA subunits dissociate and the UvrB-DNA preincision complex is formed. This complex is subsequently bound by UvrC and the second UvrB is released. If no lesion is found, the DNA wraps around the other UvrB subunit that will check the other stand for damage. The sequence is that of UvrABC system protein B from Mycobacterium tuberculosis (strain CDC 1551 / Oshkosh).